A 228-amino-acid chain; its full sequence is HGFVQNIVIDGKNYGGYLVNQYPYMSNPPEVIAWSTTATDLGFVDGTGYQTPDIICHRGAKPGALTAPVSPGGTVELQWTPWPDSHHGPVINYLAPCNGDCSTVDKTQLEFFKIAESGLINDDNPPGIWASDNLIAANNSWTVTIPTTIAPGNYVLRHEIIALHSAQNQDGAQNYPQCINLQVTGGGSDNPAGTLGTALYHDTDPGILINIYQKLSSYIIPGPPLYTG.

His1 and His86 together coordinate Cu(2+). Methylhistidine is present on His1. 2 cysteine pairs are disulfide-bonded: Cys56/Cys178 and Cys97/Cys101. N-linked (GlcNAc...) asparagine glycosylation occurs at Asn138. Positions 164 and 173 each coordinate O2. Position 175 (Tyr175) interacts with Cu(2+).

This sequence belongs to the polysaccharide monooxygenase AA9 family. It depends on Cu(2+) as a cofactor. The catalytically essential N-terminal histidine His-22 is post-translationally modified by methylation to prevent protonation of the histidine side chain, and protect the critical active site of the enzyme from oxidative damage.

Its subcellular location is the secreted. The enzyme catalyses [(1-&gt;4)-beta-D-glucosyl]n+m + reduced acceptor + O2 = 4-dehydro-beta-D-glucosyl-[(1-&gt;4)-beta-D-glucosyl]n-1 + [(1-&gt;4)-beta-D-glucosyl]m + acceptor + H2O.. With respect to regulation, small amounts of H(2)O(2) boost LPMO activity, while higher amounts lead to inactivation of the enzyme. Its function is as follows. Lytic polysaccharide monooxygenase (LPMO) that depolymerizes crystalline and amorphous polysaccharides via the oxidation of scissile alpha- or beta-(1-4)-glycosidic bonds, yielding C1 and C4 oxidation product. Catalysis by LPMOs requires the reduction of the active-site copper from Cu(II) to Cu(I) by a reducing agent and H(2)O(2) or O(2) as a cosubstrate. Is able to cleave cellulose and xylan to produce C1- and C4-oxidized products. The chain is AA9 family lytic polysaccharide monooxygenase A from Thermoascus aurantiacus.